Here is a 707-residue protein sequence, read N- to C-terminus: tRNA 5-methylaminomethyl-2-thiouridine biosynthesis bifunctional protein MnmC (707 aa).

The tRNA (mnm(5)s(2)U34)-methyltransferase stretch occupies residues 1–264; that stretch reads MTKKLEHEYI…KREMLFGTFE (264 aa). The interval 312-707 is FAD-dependent cmnm(5)s(2)U34 oxidoreductase; sequence IGGGLAGAHA…LFRDLTRNRI (396 aa).

It in the N-terminal section; belongs to the methyltransferase superfamily. tRNA (mnm(5)s(2)U34)-methyltransferase family. In the C-terminal section; belongs to the DAO family. Requires FAD as cofactor.

The protein resides in the cytoplasm. The catalysed reaction is 5-aminomethyl-2-thiouridine(34) in tRNA + S-adenosyl-L-methionine = 5-methylaminomethyl-2-thiouridine(34) in tRNA + S-adenosyl-L-homocysteine + H(+). Its function is as follows. Catalyzes the last two steps in the biosynthesis of 5-methylaminomethyl-2-thiouridine (mnm(5)s(2)U) at the wobble position (U34) in tRNA. Catalyzes the FAD-dependent demodification of cmnm(5)s(2)U34 to nm(5)s(2)U34, followed by the transfer of a methyl group from S-adenosyl-L-methionine to nm(5)s(2)U34, to form mnm(5)s(2)U34. In Saccharophagus degradans (strain 2-40 / ATCC 43961 / DSM 17024), this protein is tRNA 5-methylaminomethyl-2-thiouridine biosynthesis bifunctional protein MnmC.